Here is a 335-residue protein sequence, read N- to C-terminus: GTPase Obg (335 aa).

The Obg domain maps to 1 to 159; the sequence is MQFIDRSEIE…RKLLLELKLL (159 aa). The OBG-type G domain maps to 160-328; the sequence is AEVGIIGLPN…LLARVWQVLE (169 aa). GTP contacts are provided by residues 166-173, 191-195, 213-216, 280-283, and 309-311; these read GLPNAGKS, FTTLV, DIPG, NKAD, and SAA. Mg(2+)-binding residues include S173 and T193.

This sequence belongs to the TRAFAC class OBG-HflX-like GTPase superfamily. OBG GTPase family. Monomer. Requires Mg(2+) as cofactor.

Its subcellular location is the cytoplasm. Functionally, an essential GTPase which binds GTP, GDP and possibly (p)ppGpp with moderate affinity, with high nucleotide exchange rates and a fairly low GTP hydrolysis rate. Plays a role in control of the cell cycle, stress response, ribosome biogenesis and in those bacteria that undergo differentiation, in morphogenesis control. The polypeptide is GTPase Obg (Gloeobacter violaceus (strain ATCC 29082 / PCC 7421)).